The following is a 100-amino-acid chain: Small ribosomal subunit protein uS14c (100 aa).

This sequence belongs to the universal ribosomal protein uS14 family. In terms of assembly, part of the 30S ribosomal subunit.

It localises to the plastid. The protein localises to the chloroplast. Functionally, binds 16S rRNA, required for the assembly of 30S particles. This is Small ribosomal subunit protein uS14c from Liriodendron tulipifera (Tuliptree).